Here is a 261-residue protein sequence, read N- to C-terminus: Aquaporin-8 (261 aa).

Residues 1–36 lie on the Cytoplasmic side of the membrane; the sequence is MSGETPMCSIDLSEVKAKETRMAGRFRVSWYEQYIQ. The helical transmembrane segment at 37-57 threads the bilayer; sequence PCVVELLGSALFIFIGCLSVI. Cysteine 53 carries the post-translational modification Cysteine persulfide. Cysteine sulfenic acid (-SOH) is present on cysteine 53. At 58–84 the chain is on the extracellular side; that stretch reads ENSPDTGLLQPALAHGLALGLIIATLG. Residues 85–105 form a helical membrane-spanning segment; sequence NISGGHFNPAVSLAVTVIGGL. An NPA 1 motif is present at residues 92–94; that stretch reads NPA. Topologically, residues 106-107 are cytoplasmic; the sequence is KT. A helical membrane pass occupies residues 108-128; sequence MLLIPYWISQIFGGLIGAALA. Topologically, residues 129–156 are extracellular; it reads KVVSPEERFWNASGAAFAIVQEQEQVTE. N-linked (GlcNAc...) asparagine glycosylation is present at asparagine 139. The helical transmembrane segment at 157–177 threads the bilayer; sequence ALGVEIILTILLVLAVCMGAV. At 178-183 the chain is on the cytoplasmic side; it reads NEKTMG. A helical membrane pass occupies residues 184–204; that stretch reads PLAPFSIGFSVIVDILAGGGI. Residues 205 to 228 lie on the Extracellular side of the membrane; it reads SGACMNPARAFGPAVVAGYWDFHW. Positions 210 to 212 match the NPA 2 motif; sequence NPA. The chain crosses the membrane as a helical span at residues 229 to 249; that stretch reads IYWLGPLLAGLFVGLLIRLFI. The Cytoplasmic portion of the chain corresponds to 250 to 261; sequence GDEKTRLILKSR.

It belongs to the MIP/aquaporin (TC 1.A.8) family. In terms of processing, sulfenylation at Cys-53(C53-SOH) when hydrogen peroxide flows through the AQP8 channel, making it susceptible to hydrogen sulfide produced by CBS. Post-translationally, persulfidation at Cys-53 is required to gate AQP8 channel; under stress condition, hydrogen peroxide accumulates in the cell leading to CBS activation that produces hydrogen sulfide inducing persulfidation of oxidized Cys-53 (C53-SOH). N-glycosylated.

Its subcellular location is the cell membrane. The protein localises to the mitochondrion inner membrane. It localises to the apical cell membrane. The protein resides in the basolateral cell membrane. It is found in the smooth endoplasmic reticulum membrane. The enzyme catalyses H2O(in) = H2O(out). It catalyses the reaction H2O2(out) = H2O2(in). It carries out the reaction formamide(out) = formamide(in). The catalysed reaction is methylamine(out) = methylamine(in). With respect to regulation, reversibly gated by a two-step sulfenylation-persulfidation process in cells undergoing diverse stresses. Its function is as follows. Channel that allows the facilitated permeation of water and uncharged molecules, such as hydrogen peroxide and the neutral form of ammonia (NH3), through cellular membranes such as plasma membrane, inner mitochondrial membrane and endoplasmic reticulum membrane of several tissues. The transport of ammonia neutral form induces a parallel transport of proton, at alkaline pH when the concentration of ammonia is high. However, it is unclear whether the transport of proton takes place via the aquaporin or via an endogenous pathway. Also, may transport ammonia analogs such as formamide and methylamine, a transport favourited at basic pH due to the increase of unprotonated (neutral) form, which is expected to favor diffusion. Does not transport urea or glycerol. The water transport mechanism is mercury- and copper-sensitive and passive in response to osmotic driving forces. At the canicular plasma membrane, mediates the osmotic transport of water toward the bile canaliculus and facilitates the cAMP-induced bile canalicular water secretion, a process involved in bile formation. In addition, mediates the hydrogen peroxide release from hepatocyte mitochondria that modulates the SREBF2-mediated cholesterol synthesis and facilitates the mitochondrial ammonia uptake which is metabolized into urea, mainly under glucagon stimulation. In B cells, transports the CYBB-generated hydrogen peroxide from the external leaflet of the plasma membrane to the cytosol to promote B cell activation and differentiation for signal amplification. In the small intestine and colon system, mediates water transport through mitochondria and apical membrane of epithelial cells. May play an important role in the adaptive response of proximal tubule cells to acidosis possibly facilitating mitochondrial ammonia transport. In Notomys alexis (Spinifex hopping mouse), this protein is Aquaporin-8.